A 600-amino-acid polypeptide reads, in one-letter code: NADH-quinone oxidoreductase subunit C/D (600 aa).

An NADH dehydrogenase I subunit C region spans residues 1 to 190; the sequence is MVNNMTDLTA…SPFELTKAKQ (190 aa). The NADH dehydrogenase I subunit D stretch occupies residues 214-600; it reads DFMFLNLGPN…IDFVMSDVDR (387 aa).

The protein in the N-terminal section; belongs to the complex I 30 kDa subunit family. It in the C-terminal section; belongs to the complex I 49 kDa subunit family. As to quaternary structure, NDH-1 is composed of 13 different subunits. Subunits NuoB, CD, E, F, and G constitute the peripheral sector of the complex.

The protein localises to the cell inner membrane. The catalysed reaction is a quinone + NADH + 5 H(+)(in) = a quinol + NAD(+) + 4 H(+)(out). NDH-1 shuttles electrons from NADH, via FMN and iron-sulfur (Fe-S) centers, to quinones in the respiratory chain. The immediate electron acceptor for the enzyme in this species is believed to be ubiquinone. Couples the redox reaction to proton translocation (for every two electrons transferred, four hydrogen ions are translocated across the cytoplasmic membrane), and thus conserves the redox energy in a proton gradient. This chain is NADH-quinone oxidoreductase subunit C/D, found in Escherichia coli O6:H1 (strain CFT073 / ATCC 700928 / UPEC).